The primary structure comprises 308 residues: Tetraacyldisaccharide 4'-kinase (308 aa).

Serine 63–threonine 70 is a binding site for ATP.

Belongs to the LpxK family.

It carries out the reaction a lipid A disaccharide + ATP = a lipid IVA + ADP + H(+). It functions in the pathway glycolipid biosynthesis; lipid IV(A) biosynthesis; lipid IV(A) from (3R)-3-hydroxytetradecanoyl-[acyl-carrier-protein] and UDP-N-acetyl-alpha-D-glucosamine: step 6/6. Transfers the gamma-phosphate of ATP to the 4'-position of a tetraacyldisaccharide 1-phosphate intermediate (termed DS-1-P) to form tetraacyldisaccharide 1,4'-bis-phosphate (lipid IVA). This is Tetraacyldisaccharide 4'-kinase from Campylobacter jejuni subsp. doylei (strain ATCC BAA-1458 / RM4099 / 269.97).